Reading from the N-terminus, the 383-residue chain is Acetylornithine deacetylase (383 aa).

Histidine 80 contacts Zn(2+). Aspartate 82 is an active-site residue. Aspartate 112 is a binding site for Zn(2+). Residue glutamate 144 is part of the active site. Positions 145, 169, and 355 each coordinate Zn(2+).

Belongs to the peptidase M20A family. ArgE subfamily. As to quaternary structure, homodimer. Requires Zn(2+) as cofactor. It depends on Co(2+) as a cofactor. The cofactor is glutathione.

The protein resides in the cytoplasm. It carries out the reaction N(2)-acetyl-L-ornithine + H2O = L-ornithine + acetate. The protein operates within amino-acid biosynthesis; L-arginine biosynthesis; L-ornithine from N(2)-acetyl-L-ornithine (linear): step 1/1. Functionally, catalyzes the hydrolysis of the amide bond of N(2)-acetylated L-amino acids. Cleaves the acetyl group from N-acetyl-L-ornithine to form L-ornithine, an intermediate in L-arginine biosynthesis pathway, and a branchpoint in the synthesis of polyamines. This chain is Acetylornithine deacetylase, found in Escherichia coli O139:H28 (strain E24377A / ETEC).